The chain runs to 93 residues: Large ribosomal subunit protein bL31B (93 aa).

Belongs to the bacterial ribosomal protein bL31 family. Type B subfamily. As to quaternary structure, part of the 50S ribosomal subunit.

This is Large ribosomal subunit protein bL31B from Pseudomonas syringae pv. tomato (strain ATCC BAA-871 / DC3000).